We begin with the raw amino-acid sequence, 192 residues long: Thiamine transporter ThiT (192 aa).

A run of 6 helical transmembrane segments spans residues Leu10–Phe30, Leu31–Phe51, Ala57–Ala77, Val81–Ala101, Ala123–Phe143, and Tyr164–Pro184.

This sequence belongs to the vitamin uptake transporter (VUT/ECF) (TC 2.A.88) family. Thiamine transporter subfamily. In terms of assembly, forms a stable energy-coupling factor (ECF) transporter complex composed of a membrane-embedded substrate-binding protein (S component), two ATP-binding proteins (A components) and a transmembrane protein (T component).

The protein resides in the cell membrane. Probably a thiamine-binding protein that interacts with the energy-coupling factor (ECF) ABC-transporter complex. Unlike classic ABC transporters this ECF transporter provides the energy necessary to transport a number of different substrates. The substrates themselves are bound by transmembrane, not extracytoplasmic soluble proteins. The chain is Thiamine transporter ThiT (thiT) from Bacillus subtilis (strain 168).